The sequence spans 200 residues: Serotonin N-acetyltransferase 2, chloroplastic (200 aa).

The N-terminal 41 residues, 1–41 (MQMQAARPRVGVRPRGGIRPFPLPTLSFNNNSNRSACACAC), are a transit peptide targeting the chloroplast. Residues 55-195 (FAVRRSSTGL…MAFYRSRQQI (141 aa)) form the N-acetyltransferase domain.

The protein localises to the cytoplasm. The protein resides in the plastid. It is found in the chloroplast. It catalyses the reaction serotonin + acetyl-CoA = N-acetylserotonin + CoA + H(+). The enzyme catalyses tyramine + acetyl-CoA = N-acetyltyramine + CoA + H(+). It carries out the reaction tryptamine + acetyl-CoA = N-acetyltryptamine + CoA + H(+). The catalysed reaction is 5-methoxytryptamine + acetyl-CoA = melatonin + CoA + H(+). It participates in aromatic compound metabolism; melatonin biosynthesis; melatonin from serotonin: step 1/2. Functionally, catalyzes the N-acetylation of serotonin into N-acetylserotonin, the penultimate step in the synthesis of melatonin. Catalyzes in vitro the N-acetylation of tryptamine to produce N-acetyltryptamine, 5-methoxytryptamine to produce melatonin and tyramine to produce N-acetyltyramine. The protein is Serotonin N-acetyltransferase 2, chloroplastic of Oryza sativa subsp. japonica (Rice).